Reading from the N-terminus, the 427-residue chain is Glutamate-1-semialdehyde 2,1-aminomutase (427 aa).

At Lys265 the chain carries N6-(pyridoxal phosphate)lysine.

This sequence belongs to the class-III pyridoxal-phosphate-dependent aminotransferase family. HemL subfamily. As to quaternary structure, homodimer. The cofactor is pyridoxal 5'-phosphate.

Its subcellular location is the cytoplasm. The catalysed reaction is (S)-4-amino-5-oxopentanoate = 5-aminolevulinate. Its pathway is porphyrin-containing compound metabolism; protoporphyrin-IX biosynthesis; 5-aminolevulinate from L-glutamyl-tRNA(Glu): step 2/2. In Pseudomonas savastanoi pv. phaseolicola (strain 1448A / Race 6) (Pseudomonas syringae pv. phaseolicola (strain 1448A / Race 6)), this protein is Glutamate-1-semialdehyde 2,1-aminomutase.